A 467-amino-acid chain; its full sequence is Glutamate--tRNA ligase (467 aa).

A 'HIGH' region motif is present at residues proline 9–glycine 19. Residues lysine 241–arginine 245 carry the 'KMSKS' region motif. Lysine 244 contributes to the ATP binding site.

The protein belongs to the class-I aminoacyl-tRNA synthetase family. Glutamate--tRNA ligase type 1 subfamily. In terms of assembly, monomer.

The protein resides in the cytoplasm. It carries out the reaction tRNA(Glu) + L-glutamate + ATP = L-glutamyl-tRNA(Glu) + AMP + diphosphate. In terms of biological role, catalyzes the attachment of glutamate to tRNA(Glu) in a two-step reaction: glutamate is first activated by ATP to form Glu-AMP and then transferred to the acceptor end of tRNA(Glu). This chain is Glutamate--tRNA ligase, found in Methylobacillus flagellatus (strain ATCC 51484 / DSM 6875 / VKM B-1610 / KT).